The chain runs to 126 residues: UPF0102 protein P9303_16141 (126 aa).

The protein belongs to the UPF0102 family.

The protein is UPF0102 protein P9303_16141 of Prochlorococcus marinus (strain MIT 9303).